Here is a 205-residue protein sequence, read N- to C-terminus: Large ribosomal subunit protein uL10 (205 aa).

A disordered region spans residues 167-205 (AQGAAPAEAKAEAPASEEKAADTPAEQPAESAPEAAPEA). Composition is skewed to low complexity over residues 169–180 (GAAPAEAKAEAP) and 190–205 (PAEQ…APEA).

It belongs to the universal ribosomal protein uL10 family. As to quaternary structure, part of the ribosomal stalk of the 50S ribosomal subunit. The N-terminus interacts with L11 and the large rRNA to form the base of the stalk. The C-terminus forms an elongated spine to which L12 dimers bind in a sequential fashion forming a multimeric L10(L12)X complex.

In terms of biological role, forms part of the ribosomal stalk, playing a central role in the interaction of the ribosome with GTP-bound translation factors. The polypeptide is Large ribosomal subunit protein uL10 (Treponema denticola (strain ATCC 35405 / DSM 14222 / CIP 103919 / JCM 8153 / KCTC 15104)).